The following is a 494-amino-acid chain: Amidophosphoribosyltransferase (494 aa).

Residues 1–10 constitute a propeptide that is removed on maturation; the sequence is MFNYSGLNEE. Residue cysteine 11 is the Nucleophile of the active site. Residues 11–231 enclose the Glutamine amidotransferase type-2 domain; that stretch reads CGVFGIWNHP…AGEYVVINDK (221 aa). Mg(2+) contacts are provided by serine 294, aspartate 356, and aspartate 357.

In the C-terminal section; belongs to the purine/pyrimidine phosphoribosyltransferase family. It depends on Mg(2+) as a cofactor.

It catalyses the reaction 5-phospho-beta-D-ribosylamine + L-glutamate + diphosphate = 5-phospho-alpha-D-ribose 1-diphosphate + L-glutamine + H2O. It functions in the pathway purine metabolism; IMP biosynthesis via de novo pathway; N(1)-(5-phospho-D-ribosyl)glycinamide from 5-phospho-alpha-D-ribose 1-diphosphate: step 1/2. In terms of biological role, catalyzes the formation of phosphoribosylamine from phosphoribosylpyrophosphate (PRPP) and glutamine. The chain is Amidophosphoribosyltransferase from Staphylococcus aureus (strain Mu50 / ATCC 700699).